Here is a 69-residue protein sequence, read N- to C-terminus: Protein translocase subunit SecE (69 aa).

Residues 43 to 63 traverse the membrane as a helical segment; it reads VAGAGILVIGFVGFLIYVLLT.

This sequence belongs to the SecE/SEC61-gamma family. In terms of assembly, component of the Sec protein translocase complex. Heterotrimer consisting of SecY (alpha), SecG (beta) and SecE (gamma) subunits. The heterotrimers can form oligomers, although 1 heterotrimer is thought to be able to translocate proteins. Interacts with the ribosome. May interact with SecDF, and other proteins may be involved.

The protein localises to the cell membrane. Functionally, essential subunit of the Sec protein translocation channel SecYEG. Clamps together the 2 halves of SecY. May contact the channel plug during translocation. This Methanococcoides burtonii (strain DSM 6242 / NBRC 107633 / OCM 468 / ACE-M) protein is Protein translocase subunit SecE.